Consider the following 103-residue polypeptide: Pyrimidine/purine nucleoside phosphorylase (103 aa).

Belongs to the nucleoside phosphorylase PpnP family.

It catalyses the reaction a purine D-ribonucleoside + phosphate = a purine nucleobase + alpha-D-ribose 1-phosphate. It carries out the reaction adenosine + phosphate = alpha-D-ribose 1-phosphate + adenine. The catalysed reaction is cytidine + phosphate = cytosine + alpha-D-ribose 1-phosphate. The enzyme catalyses guanosine + phosphate = alpha-D-ribose 1-phosphate + guanine. It catalyses the reaction inosine + phosphate = alpha-D-ribose 1-phosphate + hypoxanthine. It carries out the reaction thymidine + phosphate = 2-deoxy-alpha-D-ribose 1-phosphate + thymine. The catalysed reaction is uridine + phosphate = alpha-D-ribose 1-phosphate + uracil. The enzyme catalyses xanthosine + phosphate = alpha-D-ribose 1-phosphate + xanthine. Catalyzes the phosphorolysis of diverse nucleosides, yielding D-ribose 1-phosphate and the respective free bases. Can use uridine, adenosine, guanosine, cytidine, thymidine, inosine and xanthosine as substrates. Also catalyzes the reverse reactions. The sequence is that of Pyrimidine/purine nucleoside phosphorylase from Shewanella frigidimarina (strain NCIMB 400).